We begin with the raw amino-acid sequence, 332 residues long: Protein pelota homolog (332 aa).

It belongs to the eukaryotic release factor 1 family. Pelota subfamily. In terms of assembly, monomer. The cofactor is a divalent metal cation.

Its subcellular location is the cytoplasm. Functionally, may function in recognizing stalled ribosomes, interact with stem-loop structures in stalled mRNA molecules, and effect endonucleolytic cleavage of the mRNA. May play a role in the release non-functional ribosomes and degradation of damaged mRNAs. Has endoribonuclease activity. This chain is Protein pelota homolog, found in Pyrobaculum aerophilum (strain ATCC 51768 / DSM 7523 / JCM 9630 / CIP 104966 / NBRC 100827 / IM2).